The primary structure comprises 315 residues: MATNSEFLIPARADLAAAREEWLKSLKTMRRLSDNTLIAYERDTRQFLQFLTGHLGEPPSLKEIGNLRIADLRSFLANRRNDGAGARTLGRGLAGVRSLLRHLEKRGLVNAAGASAMRAPRQPKSLPKPLTADDARRVVSADGQMAEEPWIAARNAAVLTLLYGCGLRISEALGLSGDALSDPSARSMTITGKGSKTRLVPLLPAVHKAVAQYRALCPFDLSAGQLLFRGAKGGPLHAAIIQREMQKLRAGLGLPDSATPHALRHSFATHLLGRGGDLRTIQELLGHASLSTTQVYTGVDTQRLLEVYDKTHPRA.

One can recognise a Core-binding (CB) domain in the interval 13-104 (ADLAAAREEW…GVRSLLRHLE (92 aa)). The 185-residue stretch at 125-309 (SLPKPLTADD…DTQRLLEVYD (185 aa)) folds into the Tyr recombinase domain. Active-site residues include Arg-168, Lys-193, His-261, Arg-264, and His-287. The active-site O-(3'-phospho-DNA)-tyrosine intermediate is Tyr-296.

The protein belongs to the 'phage' integrase family. XerC subfamily. In terms of assembly, forms a cyclic heterotetrameric complex composed of two molecules of XerC and two molecules of XerD.

The protein resides in the cytoplasm. Site-specific tyrosine recombinase, which acts by catalyzing the cutting and rejoining of the recombining DNA molecules. The XerC-XerD complex is essential to convert dimers of the bacterial chromosome into monomers to permit their segregation at cell division. It also contributes to the segregational stability of plasmids. The sequence is that of Tyrosine recombinase XerC from Brucella melitensis biotype 1 (strain ATCC 23456 / CCUG 17765 / NCTC 10094 / 16M).